A 476-amino-acid polypeptide reads, in one-letter code: Protein transport protein Sec61 subunit alpha isoform 1 (476 aa).

At 1 to 33 (MGIKFLEVIKPFCVILPEIQKPERKIQFKEKVL) the chain is on the cytoplasmic side. The helical transmembrane segment at 34-53 (WTAITLFIFLVCCQIPLFGI) threads the bilayer. Residues 54 to 76 (MSSDSADPFYWMRVILASNRGTL) lie on the Lumenal side of the membrane. A helical membrane pass occupies residues 77-96 (MELGISPIVTSGLIMQLLAG). Residues 97–117 (AKIIEVGDTPKDRALFNGAQK) are Cytoplasmic-facing. A helical membrane pass occupies residues 118–138 (LFGMTITIGQSIVYVMTGMYG). Residues 139–144 (DPSEMG) lie on the Lumenal side of the membrane. Residues 145–165 (AGVCLLITIQLFVAGLIVLLL) form a helical membrane-spanning segment. The Cytoplasmic segment spans residues 166–172 (DELLQKG). The chain crosses the membrane as a helical span at residues 173–193 (YGLGSGISLFIATNICETIVW). At 194–240 (KAFSPTTVNTGRGMEFEGAIIALFHLLATRTDKVRALREAFYRQNLP) the chain is on the lumenal side. Residues 241–261 (NLMNLIATIFVFAVVIYFQGF) form a helical membrane-spanning segment. The Cytoplasmic portion of the chain corresponds to 262 to 288 (RVDLPIKSARYRGQYNTYPIKLFYTSN). A helical transmembrane segment spans residues 289–309 (IPIILQSALVSNLYVISQMLS). Topologically, residues 310–354 (ARFSGNLLVSLLGTWSDTSSGGPARAYPVGGLCYYLSPPESFGSV) are lumenal. The helical transmembrane segment at 355 to 375 (LEDPVHAVVYIVFMLGSCAFF) threads the bilayer. Topologically, residues 376 to 420 (SKTWIEVSGSSAKDVAKQLKEQQMVMRGHRETSMVHELNRYIPTA) are cytoplasmic. A helical transmembrane segment spans residues 421-441 (AAFGGLCIGALSVLADFLGAI). Residues 442 to 445 (GSGT) are Lumenal-facing. Residues 446–462 (GILLAVTIIYQYFEIFV) traverse the membrane as a helical segment. The Cytoplasmic portion of the chain corresponds to 463–476 (KEQSEVGSMGALLF).

It belongs to the SecY/SEC61-alpha family. As to quaternary structure, the SEC61 channel-forming translocon complex consists of channel-forming core components SEC61A1, SEC61B and SEC61G and different auxiliary components such as SEC62 and SEC63. The SEC61 channel associates with the multi-pass translocon (MPT) complex.

The protein resides in the endoplasmic reticulum membrane. Functionally, component of SEC61 channel-forming translocon complex that mediates transport of signal peptide-containing precursor polypeptides across the endoplasmic reticulum (ER). Forms a ribosome receptor and a gated pore in the ER membrane, both functions required for cotranslational translocation of nascent polypeptides. May cooperate with auxiliary protein SEC62, SEC63 and HSPA5/BiP to enable post-translational transport of small presecretory proteins. The SEC61 channel is also involved in ER membrane insertion of transmembrane proteins: it mediates membrane insertion of the first few transmembrane segments of proteins, while insertion of subsequent transmembrane regions of multi-pass membrane proteins is mediated by the multi-pass translocon (MPT) complex. The SEC61 channel cooperates with the translocating protein TRAM1 to import nascent proteins into the ER. Controls the passive efflux of calcium ions from the ER lumen to the cytosol through SEC61 channel, contributing to the maintenance of cellular calcium homeostasis. Plays a critical role in nephrogenesis, specifically at pronephros stage. The polypeptide is Protein transport protein Sec61 subunit alpha isoform 1 (SEC61A1) (Bos taurus (Bovine)).